The following is an 857-amino-acid chain: Leucine-rich repeat extensin-like protein 5 (857 aa).

The N-terminal stretch at M1–S31 is a signal peptide. The LRR 1 repeat unit spans residues L32–Y53. N98 carries N-linked (GlcNAc...) asparagine glycosylation. 10 LRR repeats span residues I125–L149, T150–R172, K174–L197, P198–K221, L223–S244, V246–M267, R268–L291, K292–M315, V316–L339, and R341–L362. N-linked (GlcNAc...) asparagine glycosylation is present at N293. N-linked (GlcNAc...) asparagine glycosylation occurs at N344. Disordered stretches follow at residues P406–P776 and Y817–P839. Composition is skewed to pro residues over residues V408–I571 and P579–H768. Residues S615–Y857 are contains the Ser-Pro(4) repeats.

Post-translationally, hydroxylated on proline residues in the S-P-P-P-P repeat. In terms of processing, O-glycosylated on hydroxyprolines. As to expression, expressed in roots, leaves and flowers.

The protein localises to the secreted. It localises to the cell wall. Modulates cell morphogenesis by regulating cell wall formation and assembly, and/or growth polarization. The chain is Leucine-rich repeat extensin-like protein 5 (LRX5) from Arabidopsis thaliana (Mouse-ear cress).